Consider the following 218-residue polypeptide: GTP cyclohydrolase 1 (218 aa).

Residues C109, H112, and C180 each contribute to the Zn(2+) site.

The protein belongs to the GTP cyclohydrolase I family. Toroid-shaped homodecamer, composed of two pentamers of five dimers.

It carries out the reaction GTP + H2O = 7,8-dihydroneopterin 3'-triphosphate + formate + H(+). It participates in cofactor biosynthesis; 7,8-dihydroneopterin triphosphate biosynthesis; 7,8-dihydroneopterin triphosphate from GTP: step 1/1. The polypeptide is GTP cyclohydrolase 1 (Mannheimia succiniciproducens (strain KCTC 0769BP / MBEL55E)).